Reading from the N-terminus, the 229-residue chain is Flagellar L-ring protein (229 aa).

Residues 1–23 (MSPLTRIALALAASAALVLALTA) form the signal peptide. A lipid anchor (N-palmitoyl cysteine) is attached at C24. Residue C24 is the site of S-diacylglycerol cysteine attachment.

It belongs to the FlgH family. The basal body constitutes a major portion of the flagellar organelle and consists of four rings (L,P,S, and M) mounted on a central rod.

The protein localises to the cell outer membrane. The protein resides in the bacterial flagellum basal body. Its function is as follows. Assembles around the rod to form the L-ring and probably protects the motor/basal body from shearing forces during rotation. The chain is Flagellar L-ring protein from Anaeromyxobacter dehalogenans (strain 2CP-C).